Consider the following 134-residue polypeptide: Small ribosomal subunit protein uS8c (134 aa).

Belongs to the universal ribosomal protein uS8 family. As to quaternary structure, part of the 30S ribosomal subunit.

The protein resides in the plastid. Functionally, one of the primary rRNA binding proteins, it binds directly to 16S rRNA central domain where it helps coordinate assembly of the platform of the 30S subunit. The chain is Small ribosomal subunit protein uS8c (rps8) from Cuscuta obtusiflora (Peruvian dodder).